The chain runs to 425 residues: NAC transcription factor ONAC010 (425 aa).

The segment covering 1–10 (MESPDSSSGS) has biased composition (polar residues). The segment at 1 to 34 (MESPDSSSGSAPPRVLRRQQQQPGSAPELPPGFR) is disordered. The span at 12 to 23 (PPRVLRRQQQQP) shows a compositional bias: low complexity. One can recognise an NAC domain in the interval 29–200 (LPPGFRFHPT…DWVLCRIYKK (172 aa)). The DNA-binding element occupies 129–206 (VGVKKALVFY…IYKKTNKAGA (78 aa)).

Its subcellular location is the nucleus. Functionally, transcription factor of the NAC family associated with male fertility. This is NAC transcription factor ONAC010 (ONAC010) from Oryza sativa subsp. indica (Rice).